The following is a 269-amino-acid chain: Triosephosphate isomerase (269 aa).

8–10 (NWK) is a binding site for substrate. His105 (electrophile) is an active-site residue. Glu183 acts as the Proton acceptor in catalysis. Substrate-binding positions include Gly189, Ser227, and 248 to 249 (GG).

It belongs to the triosephosphate isomerase family. As to quaternary structure, homodimer.

The protein resides in the cytoplasm. It carries out the reaction D-glyceraldehyde 3-phosphate = dihydroxyacetone phosphate. The protein operates within carbohydrate biosynthesis; gluconeogenesis. It functions in the pathway carbohydrate degradation; glycolysis; D-glyceraldehyde 3-phosphate from glycerone phosphate: step 1/1. Its function is as follows. Involved in the gluconeogenesis. Catalyzes stereospecifically the conversion of dihydroxyacetone phosphate (DHAP) to D-glyceraldehyde-3-phosphate (G3P). This is Triosephosphate isomerase from Psychrobacter cryohalolentis (strain ATCC BAA-1226 / DSM 17306 / VKM B-2378 / K5).